The primary structure comprises 341 residues: 5-formaminoimidazole-4-carboxamide-1-(beta)-D-ribofuranosyl 5'-monophosphate synthetase (341 aa).

5-amino-1-(5-phospho-beta-D-ribosyl)imidazole-4-carboxamide contacts are provided by histidine 27 and serine 92. Residues 113–328 (RELLRWEADQ…MGERIAHEIK (216 aa)) enclose the ATP-grasp domain. Residues 143-195 (AEEV…VPAY) and glutamate 217 contribute to the ATP site. Asparagine 237 is a 5-amino-1-(5-phospho-beta-D-ribosyl)imidazole-4-carboxamide binding site. The Mg(2+) site is built by glutamate 276 and glutamate 289.

This sequence belongs to the phosphohexose mutase family. Mg(2+) is required as a cofactor. Mn(2+) serves as cofactor.

The enzyme catalyses 5-amino-1-(5-phospho-beta-D-ribosyl)imidazole-4-carboxamide + formate + ATP = 5-formamido-1-(5-phospho-D-ribosyl)imidazole-4-carboxamide + ADP + phosphate. Its pathway is purine metabolism; IMP biosynthesis via de novo pathway; 5-formamido-1-(5-phospho-D-ribosyl)imidazole-4-carboxamide from 5-amino-1-(5-phospho-D-ribosyl)imidazole-4-carboxamide (formate route): step 1/1. Its function is as follows. Catalyzes the ATP- and formate-dependent formylation of 5-aminoimidazole-4-carboxamide-1-beta-d-ribofuranosyl 5'-monophosphate (AICAR) to 5-formaminoimidazole-4-carboxamide-1-beta-d-ribofuranosyl 5'-monophosphate (FAICAR) in the absence of folates. The protein is 5-formaminoimidazole-4-carboxamide-1-(beta)-D-ribofuranosyl 5'-monophosphate synthetase of Pyrobaculum aerophilum (strain ATCC 51768 / DSM 7523 / JCM 9630 / CIP 104966 / NBRC 100827 / IM2).